The sequence spans 370 residues: Histidinol-phosphate aminotransferase (370 aa).

Lys223 carries the post-translational modification N6-(pyridoxal phosphate)lysine.

Belongs to the class-II pyridoxal-phosphate-dependent aminotransferase family. Histidinol-phosphate aminotransferase subfamily. As to quaternary structure, homodimer. Pyridoxal 5'-phosphate is required as a cofactor.

The enzyme catalyses L-histidinol phosphate + 2-oxoglutarate = 3-(imidazol-4-yl)-2-oxopropyl phosphate + L-glutamate. Its pathway is amino-acid biosynthesis; L-histidine biosynthesis; L-histidine from 5-phospho-alpha-D-ribose 1-diphosphate: step 7/9. The polypeptide is Histidinol-phosphate aminotransferase (Methylobacterium sp. (strain 4-46)).